We begin with the raw amino-acid sequence, 287 residues long: MKVNTNIISLKTQEYLRKNNEGMTQAQERLASGKRINSSLDDAAGLAVVTRMNVKSTGLDAASKNSSMGIDLLQTADSALSSMSSILQRMRQLAVQSSNGSFSDEDRKQYTAEFGSLIKELDHVADTTNYNNIKLLDQTATGAATQVSIQASDKANDLINIDLFNAKGLSAGTITLGSGSTVAGYSALSVADADSSQQATEAIDELINNISNGRALLGAGMSRLSYNVSNVNNQSIATKASASSIEDADMAAEMSEMTKYKILTQTSISMLSQANQTPQMLTQLINS.

Belongs to the bacterial flagellin family.

Its subcellular location is the secreted. It localises to the bacterial flagellum. Its function is as follows. Flagellin is the subunit protein which polymerizes to form the filaments of bacterial flagella. This Listeria monocytogenes serovar 1/2a (strain ATCC BAA-679 / EGD-e) protein is Flagellin (flaA).